A 94-amino-acid polypeptide reads, in one-letter code: Co-chaperonin GroES (94 aa).

This sequence belongs to the GroES chaperonin family. Heptamer of 7 subunits arranged in a ring. Interacts with the chaperonin GroEL.

It localises to the cytoplasm. Functionally, together with the chaperonin GroEL, plays an essential role in assisting protein folding. The GroEL-GroES system forms a nano-cage that allows encapsulation of the non-native substrate proteins and provides a physical environment optimized to promote and accelerate protein folding. GroES binds to the apical surface of the GroEL ring, thereby capping the opening of the GroEL channel. This chain is Co-chaperonin GroES, found in Acetivibrio thermocellus (strain ATCC 27405 / DSM 1237 / JCM 9322 / NBRC 103400 / NCIMB 10682 / NRRL B-4536 / VPI 7372) (Clostridium thermocellum).